A 200-amino-acid polypeptide reads, in one-letter code: Probable GTP-binding protein EngB (200 aa).

An EngB-type G domain is found at 25–199 (SGYEVAFAGR…ISLLDRWYEW (175 aa)). GTP-binding positions include 33-40 (GRSNAGKS), 60-64 (GRTQL), 78-81 (DLPG), 145-148 (TKAD), and 178-180 (FSS). 2 residues coordinate Mg(2+): Ser-40 and Thr-62.

Belongs to the TRAFAC class TrmE-Era-EngA-EngB-Septin-like GTPase superfamily. EngB GTPase family. It depends on Mg(2+) as a cofactor.

Its function is as follows. Necessary for normal cell division and for the maintenance of normal septation. The polypeptide is Probable GTP-binding protein EngB (Legionella pneumophila (strain Corby)).